The following is a 428-amino-acid chain: ORC1-type DNA replication protein 5 (428 aa).

Residues Thr62–Leu66, Tyr219, and Arg231 each bind ATP.

It belongs to the CDC6/cdc18 family.

In terms of biological role, involved in regulation of DNA replication. In Halobacterium salinarum (strain ATCC 700922 / JCM 11081 / NRC-1) (Halobacterium halobium), this protein is ORC1-type DNA replication protein 5 (orc5).